The primary structure comprises 336 residues: N-acetyl-gamma-glutamyl-phosphate reductase (336 aa).

Cys144 is a catalytic residue.

Belongs to the NAGSA dehydrogenase family. Type 1 subfamily.

The protein resides in the cytoplasm. It carries out the reaction N-acetyl-L-glutamate 5-semialdehyde + phosphate + NADP(+) = N-acetyl-L-glutamyl 5-phosphate + NADPH + H(+). It functions in the pathway amino-acid biosynthesis; L-arginine biosynthesis; N(2)-acetyl-L-ornithine from L-glutamate: step 3/4. Catalyzes the NADPH-dependent reduction of N-acetyl-5-glutamyl phosphate to yield N-acetyl-L-glutamate 5-semialdehyde. The chain is N-acetyl-gamma-glutamyl-phosphate reductase from Methanosarcina acetivorans (strain ATCC 35395 / DSM 2834 / JCM 12185 / C2A).